The sequence spans 363 residues: NADH-quinone oxidoreductase subunit H (363 aa).

10 consecutive transmembrane segments (helical) span residues 29–49 (VLKILMIAIPLIVSVAFYVVW), 62–82 (GPMYVGMGLFQAFADVFKLLF), 94–114 (AIFVIAPLLTLAPSFAAWAVV), 127–147 (VGLLYLLAMTSLGVYGIILAG), 166–186 (VVSYEIAMGFALVGVMIAAGS), 202–222 (FFDWFLIPLFPLFIVYWVSGV), 239–257 (IVAGHMVEYSGSVFALFFL), 264–286 (ILVSFLISIFFLGGWLSPIQGWV), 293–313 (LIDWVWNGGWPWLLLKVLFFA), and 339–359 (FIPLTIVWIAVTALMVFSGVI).

The protein belongs to the complex I subunit 1 family. NDH-1 is composed of 14 different subunits. Subunits NuoA, H, J, K, L, M, N constitute the membrane sector of the complex.

The protein resides in the cell inner membrane. The enzyme catalyses a quinone + NADH + 5 H(+)(in) = a quinol + NAD(+) + 4 H(+)(out). In terms of biological role, NDH-1 shuttles electrons from NADH, via FMN and iron-sulfur (Fe-S) centers, to quinones in the respiratory chain. The immediate electron acceptor for the enzyme in this species is believed to be ubiquinone. Couples the redox reaction to proton translocation (for every two electrons transferred, four hydrogen ions are translocated across the cytoplasmic membrane), and thus conserves the redox energy in a proton gradient. This subunit may bind ubiquinone. This is NADH-quinone oxidoreductase subunit H from Xylella fastidiosa (strain Temecula1 / ATCC 700964).